We begin with the raw amino-acid sequence, 584 residues long: Kinesin-like protein KIN-10C (584 aa).

In terms of domain architecture, Kinesin motor spans 11-324 (PVRVVLRVRP…VSLAARSRHV (314 aa)). Residue 99 to 106 (GATGSGKT) participates in ATP binding. 2 disordered regions span residues 377-398 (SMSH…AMDQ) and 445-469 (DKTG…KQRT).

Belongs to the TRAFAC class myosin-kinesin ATPase superfamily. Kinesin family. KIN-10 subfamily.

This chain is Kinesin-like protein KIN-10C, found in Oryza sativa subsp. japonica (Rice).